The sequence spans 545 residues: Hydroxylamine reductase (545 aa).

Residues Cys-7, Cys-10, Cys-19, and Cys-25 each contribute to the [4Fe-4S] cluster site. Residues His-241, Glu-265, Cys-309, Cys-400, Cys-428, Cys-453, Glu-488, and Lys-490 each coordinate hybrid [4Fe-2O-2S] cluster. At Cys-400 the chain carries Cysteine persulfide; in oxidized form.

It belongs to the HCP family. In terms of assembly, monomer. Requires [4Fe-4S] cluster as cofactor. Hybrid [4Fe-2O-2S] cluster is required as a cofactor.

The protein resides in the cytoplasm. The enzyme catalyses A + NH4(+) + H2O = hydroxylamine + AH2 + H(+). Functionally, catalyzes the reduction of hydroxylamine to form NH(3) and H(2)O. The sequence is that of Hydroxylamine reductase from Desulfovibrio desulfuricans (strain ATCC 27774 / DSM 6949 / MB).